A 299-amino-acid polypeptide reads, in one-letter code: Cold shock protein 1 (299 aa).

An N-acetylalanine modification is found at alanine 2. Residues 12–76 (TGKVNWFNAS…GKTKAVNVTA (65 aa)) form the CSD domain. Positions 76-97 (APGGGSLKKENNSRGNGARRGG) are disordered. 7 consecutive CCHC-type zinc fingers follow at residues 100-117 (SGCY…DCGI), 132-149 (EGCY…DCTS), 164-181 (DGCY…DCTQ), 198-215 (DGCY…DCTQ), 230-247 (GTCY…DCAT), 253-270 (RGCY…DCDQ), and 280-297 (NACY…ECSS).

It belongs to the cold shock protein (CSP) family. Mostly expressed in shoot apices and siliques, and, to a lower extent, in roots, cotyledons, stems, shoots, leaves, floral buds and flowers.

The protein localises to the nucleus. It localises to the cytoplasm. In terms of biological role, chaperone that binds to RNA, single- (ssDNA) and double-stranded (dsDNA) DNA, and unwinds nucleic acid duplex. Exhibits a DNA melting activity. May be involved in cold resistance. Prevents seed germination under dehydration or salt stress conditions. This chain is Cold shock protein 1 (CSP1), found in Arabidopsis thaliana (Mouse-ear cress).